We begin with the raw amino-acid sequence, 122 residues long: Large ribosomal subunit protein uL14 (122 aa).

The protein belongs to the universal ribosomal protein uL14 family. As to quaternary structure, part of the 50S ribosomal subunit. Forms a cluster with proteins L3 and L19. In the 70S ribosome, L14 and L19 interact and together make contacts with the 16S rRNA in bridges B5 and B8.

In terms of biological role, binds to 23S rRNA. Forms part of two intersubunit bridges in the 70S ribosome. The polypeptide is Large ribosomal subunit protein uL14 (Desulforudis audaxviator (strain MP104C)).